The sequence spans 1622 residues: Ferredoxin-dependent glutamate synthase 1, chloroplastic/mitochondrial (1622 aa).

The N-terminal 105 residues, 1–105 (MAMQSLSPVP…LEDILSERGA (105 aa)), are a transit peptide targeting the chloroplast and mitochondrion. Cysteine 106 acts as the For GATase activity in catalysis. The region spanning 106–505 (CGVGFIANLD…PGMMIAVDLV (400 aa)) is the Glutamine amidotransferase type-2 domain. 1184-1241 (LTETHQTLIANGLRERVILRVDGGLKSGVDVLMAAAMGADEYGFGSLAMIATGCVMAR) is a binding site for FMN. [3Fe-4S] cluster-binding residues include cysteine 1237, cysteine 1243, and cysteine 1248.

The protein belongs to the glutamate synthase family. As to quaternary structure, interacts with SHM1. [3Fe-4S] cluster serves as cofactor. It depends on FAD as a cofactor. Requires FMN as cofactor. As to expression, highly expressed in leaves. High expression in the leaf mesophyll and phloem companion cell-sieve element complex.

Its subcellular location is the plastid. The protein resides in the chloroplast stroma. It is found in the mitochondrion matrix. The enzyme catalyses 2 oxidized [2Fe-2S]-[ferredoxin] + 2 L-glutamate = L-glutamine + 2 reduced [2Fe-2S]-[ferredoxin] + 2-oxoglutarate + 2 H(+). Its pathway is amino-acid biosynthesis; L-glutamate biosynthesis via GLT pathway; L-glutamate from 2-oxoglutarate and L-glutamine (ferredoxin route): step 1/1. It functions in the pathway energy metabolism; nitrogen metabolism. In terms of biological role, involved in glutamate biosynthesis in leaf. Required for the reassimilation of ammonium ions generated during photorespiration. The polypeptide is Ferredoxin-dependent glutamate synthase 1, chloroplastic/mitochondrial (Arabidopsis thaliana (Mouse-ear cress)).